We begin with the raw amino-acid sequence, 519 residues long: Arabinose import ATP-binding protein AraG 2 (519 aa).

ABC transporter domains are found at residues 29 to 264 (LSLD…MVGR) and 264 to 515 (RSIE…LIKL). 61-68 (GENGAGKS) contacts ATP.

Belongs to the ABC transporter superfamily. Arabinose importer (TC 3.A.1.2.2) family. In terms of assembly, the complex is composed of two ATP-binding proteins (AraG), two transmembrane proteins (AraH) and a solute-binding protein (AraF).

It localises to the cell inner membrane. It carries out the reaction L-arabinose(out) + ATP + H2O = L-arabinose(in) + ADP + phosphate + H(+). Its function is as follows. Part of the ABC transporter complex AraFGH involved in arabinose import. Responsible for energy coupling to the transport system. The sequence is that of Arabinose import ATP-binding protein AraG 2 from Burkholderia ambifaria (strain ATCC BAA-244 / DSM 16087 / CCUG 44356 / LMG 19182 / AMMD) (Burkholderia cepacia (strain AMMD)).